The sequence spans 452 residues: Retinoid-inducible serine carboxypeptidase (452 aa).

Positions 1 to 28 are cleaved as a signal peptide; that stretch reads MELSRRICLVRLWLLLLSFLLGFSAGSA. N-linked (GlcNAc...) asparagine glycosylation is found at N64, N102, and N126. S167 is an active-site residue. N-linked (GlcNAc...) asparagine glycosylation is found at N192 and N362. Residues D371 and H431 contribute to the active site.

Belongs to the peptidase S10 family. As to expression, highly expressed in aorta, bladder, and kidney with much lower levels in all other tissues analyzed. Expression in kidney is restricted to proximal convoluted tubules.

The protein localises to the secreted. Functionally, may be involved in vascular wall and kidney homeostasis. In Rattus norvegicus (Rat), this protein is Retinoid-inducible serine carboxypeptidase (Scpep1).